Reading from the N-terminus, the 205-residue chain is Thiamine-phosphate synthase (205 aa).

4-amino-2-methyl-5-(diphosphooxymethyl)pyrimidine contacts are provided by residues 36-40 (QYRRK) and D68. Residues D69 and D88 each coordinate Mg(2+). S106 lines the 4-amino-2-methyl-5-(diphosphooxymethyl)pyrimidine pocket. 132-134 (SPT) is a binding site for 2-[(2R,5Z)-2-carboxy-4-methylthiazol-5(2H)-ylidene]ethyl phosphate. K135 is a 4-amino-2-methyl-5-(diphosphooxymethyl)pyrimidine binding site. Residues G162 and 182–183 (IS) contribute to the 2-[(2R,5Z)-2-carboxy-4-methylthiazol-5(2H)-ylidene]ethyl phosphate site.

It belongs to the thiamine-phosphate synthase family. It depends on Mg(2+) as a cofactor.

It catalyses the reaction 2-[(2R,5Z)-2-carboxy-4-methylthiazol-5(2H)-ylidene]ethyl phosphate + 4-amino-2-methyl-5-(diphosphooxymethyl)pyrimidine + 2 H(+) = thiamine phosphate + CO2 + diphosphate. The enzyme catalyses 2-(2-carboxy-4-methylthiazol-5-yl)ethyl phosphate + 4-amino-2-methyl-5-(diphosphooxymethyl)pyrimidine + 2 H(+) = thiamine phosphate + CO2 + diphosphate. The catalysed reaction is 4-methyl-5-(2-phosphooxyethyl)-thiazole + 4-amino-2-methyl-5-(diphosphooxymethyl)pyrimidine + H(+) = thiamine phosphate + diphosphate. It functions in the pathway cofactor biosynthesis; thiamine diphosphate biosynthesis; thiamine phosphate from 4-amino-2-methyl-5-diphosphomethylpyrimidine and 4-methyl-5-(2-phosphoethyl)-thiazole: step 1/1. Functionally, condenses 4-methyl-5-(beta-hydroxyethyl)thiazole monophosphate (THZ-P) and 2-methyl-4-amino-5-hydroxymethyl pyrimidine pyrophosphate (HMP-PP) to form thiamine monophosphate (TMP). The chain is Thiamine-phosphate synthase from Caldivirga maquilingensis (strain ATCC 700844 / DSM 13496 / JCM 10307 / IC-167).